Reading from the N-terminus, the 375-residue chain is Chaperone protein DnaJ (375 aa).

A J domain is found at 5 to 70 (DFYEVLGVER…SKRAAYDQYG (66 aa)). The CR-type zinc finger occupies 134 to 212 (GTTVSIRVPT…CHGEGRVEEY (79 aa)). Zn(2+)-binding residues include C147, C150, C164, C167, C186, C189, C200, and C203. CXXCXGXG motif repeat units lie at residues 147–154 (CKPCDGSG), 164–171 (CPTCGGIG), 186–193 (CPRCHGQG), and 200–207 (CNSCHGEG).

Belongs to the DnaJ family. As to quaternary structure, homodimer. Zn(2+) is required as a cofactor.

The protein resides in the cytoplasm. Functionally, participates actively in the response to hyperosmotic and heat shock by preventing the aggregation of stress-denatured proteins and by disaggregating proteins, also in an autonomous, DnaK-independent fashion. Unfolded proteins bind initially to DnaJ; upon interaction with the DnaJ-bound protein, DnaK hydrolyzes its bound ATP, resulting in the formation of a stable complex. GrpE releases ADP from DnaK; ATP binding to DnaK triggers the release of the substrate protein, thus completing the reaction cycle. Several rounds of ATP-dependent interactions between DnaJ, DnaK and GrpE are required for fully efficient folding. Also involved, together with DnaK and GrpE, in the DNA replication of plasmids through activation of initiation proteins. The protein is Chaperone protein DnaJ of Pseudomonas entomophila (strain L48).